The primary structure comprises 231 residues: Somatolactin-1 (231 aa).

An N-terminal signal peptide occupies residues 1–24; it reads MRMIRAIKQGQWAVLLWPYLLTAS. Cystine bridges form between Cys29-Cys39, Cys89-Cys205, and Cys222-Cys230. N-linked (GlcNAc...) asparagine glycosylation is present at Asn145.

Belongs to the somatotropin/prolactin family. In terms of tissue distribution, pituitary gland.

The protein resides in the secreted. In Sparus aurata (Gilthead sea bream), this protein is Somatolactin-1.